The following is a 469-amino-acid chain: 3-isopropylmalate dehydratase large subunit (469 aa).

3 residues coordinate [4Fe-4S] cluster: C347, C407, and C410.

It belongs to the aconitase/IPM isomerase family. LeuC type 1 subfamily. As to quaternary structure, heterodimer of LeuC and LeuD. Requires [4Fe-4S] cluster as cofactor.

The catalysed reaction is (2R,3S)-3-isopropylmalate = (2S)-2-isopropylmalate. It functions in the pathway amino-acid biosynthesis; L-leucine biosynthesis; L-leucine from 3-methyl-2-oxobutanoate: step 2/4. Its function is as follows. Catalyzes the isomerization between 2-isopropylmalate and 3-isopropylmalate, via the formation of 2-isopropylmaleate. The protein is 3-isopropylmalate dehydratase large subunit of Prochlorococcus marinus (strain NATL1A).